The chain runs to 117 residues: MARVKRGVVARRRHKKILNQAKGYYGARSRVYRVAKQAVIKAGQYAYRDRRNRKRAFRALWIARINAGARANGLSYSRLIAGLKKANVEIDRKVLADLAMNEQQAFAAVVEKAKASL.

It belongs to the bacterial ribosomal protein bL20 family.

In terms of biological role, binds directly to 23S ribosomal RNA and is necessary for the in vitro assembly process of the 50S ribosomal subunit. It is not involved in the protein synthesizing functions of that subunit. The chain is Large ribosomal subunit protein bL20 from Marinobacter nauticus (strain ATCC 700491 / DSM 11845 / VT8) (Marinobacter aquaeolei).